The primary structure comprises 284 residues: ATP synthase gamma chain (284 aa).

It belongs to the ATPase gamma chain family. F-type ATPases have 2 components, CF(1) - the catalytic core - and CF(0) - the membrane proton channel. CF(1) has five subunits: alpha(3), beta(3), gamma(1), delta(1), epsilon(1). CF(0) has three main subunits: a, b and c.

The protein localises to the cell membrane. Produces ATP from ADP in the presence of a proton gradient across the membrane. The gamma chain is believed to be important in regulating ATPase activity and the flow of protons through the CF(0) complex. This is ATP synthase gamma chain from Bacillus licheniformis (strain ATCC 14580 / DSM 13 / JCM 2505 / CCUG 7422 / NBRC 12200 / NCIMB 9375 / NCTC 10341 / NRRL NRS-1264 / Gibson 46).